A 201-amino-acid polypeptide reads, in one-letter code: Holliday junction branch migration complex subunit RuvA (201 aa).

A domain I region spans residues 1-64; sequence MIGRLRGELV…EDAHVLYGFA (64 aa). The interval 65–143 is domain II; it reads SESERALFRS…SLPAAVTLTG (79 aa). The tract at residues 144–153 is flexible linker; it reads GKPAAAAARA. Positions 153 to 201 are domain III; sequence APDPVSDAVSALVSLGYKPQEASRLISAVEGEAERSEDLIRLALKATLK.

It belongs to the RuvA family. In terms of assembly, homotetramer. Forms an RuvA(8)-RuvB(12)-Holliday junction (HJ) complex. HJ DNA is sandwiched between 2 RuvA tetramers; dsDNA enters through RuvA and exits via RuvB. An RuvB hexamer assembles on each DNA strand where it exits the tetramer. Each RuvB hexamer is contacted by two RuvA subunits (via domain III) on 2 adjacent RuvB subunits; this complex drives branch migration. In the full resolvosome a probable DNA-RuvA(4)-RuvB(12)-RuvC(2) complex forms which resolves the HJ.

It is found in the cytoplasm. Its function is as follows. The RuvA-RuvB-RuvC complex processes Holliday junction (HJ) DNA during genetic recombination and DNA repair, while the RuvA-RuvB complex plays an important role in the rescue of blocked DNA replication forks via replication fork reversal (RFR). RuvA specifically binds to HJ cruciform DNA, conferring on it an open structure. The RuvB hexamer acts as an ATP-dependent pump, pulling dsDNA into and through the RuvAB complex. HJ branch migration allows RuvC to scan DNA until it finds its consensus sequence, where it cleaves and resolves the cruciform DNA. This Thioalkalivibrio sulfidiphilus (strain HL-EbGR7) protein is Holliday junction branch migration complex subunit RuvA.